Consider the following 96-residue polypeptide: Protein RnfH (96 aa).

The protein belongs to the UPF0125 (RnfH) family.

This chain is Protein RnfH, found in Escherichia coli O17:K52:H18 (strain UMN026 / ExPEC).